We begin with the raw amino-acid sequence, 342 residues long: S-adenosylmethionine:tRNA ribosyltransferase-isomerase (342 aa).

Belongs to the QueA family. As to quaternary structure, monomer.

Its subcellular location is the cytoplasm. The enzyme catalyses 7-aminomethyl-7-carbaguanosine(34) in tRNA + S-adenosyl-L-methionine = epoxyqueuosine(34) in tRNA + adenine + L-methionine + 2 H(+). It functions in the pathway tRNA modification; tRNA-queuosine biosynthesis. In terms of biological role, transfers and isomerizes the ribose moiety from AdoMet to the 7-aminomethyl group of 7-deazaguanine (preQ1-tRNA) to give epoxyqueuosine (oQ-tRNA). This chain is S-adenosylmethionine:tRNA ribosyltransferase-isomerase, found in Streptococcus pneumoniae serotype 4 (strain ATCC BAA-334 / TIGR4).